Reading from the N-terminus, the 408-residue chain is Acetate kinase (408 aa).

Asn7 is a binding site for Mg(2+). Lys14 lines the ATP pocket. Arg91 is a substrate binding site. Asp148 serves as the catalytic Proton donor/acceptor. Residues 208-212 (HLGNG), 283-285 (DFR), and 331-335 (GIGEN) each bind ATP. Glu384 is a binding site for Mg(2+).

It belongs to the acetokinase family. In terms of assembly, homodimer. Mg(2+) serves as cofactor. Mn(2+) is required as a cofactor.

It localises to the cytoplasm. The catalysed reaction is acetate + ATP = acetyl phosphate + ADP. The protein operates within metabolic intermediate biosynthesis; acetyl-CoA biosynthesis; acetyl-CoA from acetate: step 1/2. Catalyzes the formation of acetyl phosphate from acetate and ATP. Can also catalyze the reverse reaction. The sequence is that of Acetate kinase from Methanosarcina mazei (strain ATCC BAA-159 / DSM 3647 / Goe1 / Go1 / JCM 11833 / OCM 88) (Methanosarcina frisia).